A 335-amino-acid chain; its full sequence is Cathepsin B (335 aa).

The first 17 residues, 1 to 17 (MWRLLATLSCLLVLTSA), serve as a signal peptide directing secretion. Residues 18–79 (RSSLYFPPLS…QRDAFAADVV (62 aa)) constitute a propeptide, activation peptide. 6 disulfides stabilise this stretch: Cys-93-Cys-122, Cys-105-Cys-150, Cys-141-Cys-207, Cys-142-Cys-146, Cys-179-Cys-211, and Cys-187-Cys-198. The active site involves Cys-108. Asn-192 is a glycosylation site (N-linked (GlcNAc...) asparagine). At Lys-220 the chain carries N6-acetyllysine. Cys-227 and Cys-331 form a disulfide bridge. Catalysis depends on residues His-278 and Asn-298. The propeptide occupies 333–335 (HQY).

The protein belongs to the peptidase C1 family. As to quaternary structure, dimer of a heavy chain and a light chain cross-linked by a disulfide bond. Interacts with SRPX2. Directly interacts with SHKBP1. Expressed in myoblasts, the myotube, fibroblasts and fetal muscle (at protein level). Expressed in the spleen (at protein level).

The protein resides in the lysosome. It localises to the melanosome. Its subcellular location is the secreted. The protein localises to the extracellular space. It is found in the apical cell membrane. The catalysed reaction is Hydrolysis of proteins with broad specificity for peptide bonds. Preferentially cleaves -Arg-Arg-|-Xaa bonds in small molecule substrates (thus differing from cathepsin L). In addition to being an endopeptidase, shows peptidyl-dipeptidase activity, liberating C-terminal dipeptides.. Its function is as follows. Thiol protease which is believed to participate in intracellular degradation and turnover of proteins. Cleaves matrix extracellular phosphoglycoprotein MEPE. Involved in the solubilization of cross-linked TG/thyroglobulin in the thyroid follicle lumen. Has also been implicated in tumor invasion and metastasis. In Bos taurus (Bovine), this protein is Cathepsin B (CTSB).